A 369-amino-acid polypeptide reads, in one-letter code: Ubiquitin-conjugating enzyme E2 Q2 (369 aa).

The tract at residues 117-143 is disordered; sequence DQPLPTGQNGTTEEVTSEEEEEEEMAE. Residues 131–143 are compositionally biased toward acidic residues; sequence VTSEEEEEEEMAE. Residues 198 to 362 enclose the UBC core domain; sequence QASDRLMKEL…VQIHEKNGWY (165 aa). The active-site Glycyl thioester intermediate is the cysteine 298.

This sequence belongs to the ubiquitin-conjugating enzyme family. Auto-ubiquitinated in vitro. As to expression, detected at embryo implantation sites in the luminal epithelium of pregnant endometrium. Detected at low levels in ovary and liver.

The protein resides in the cytoplasm. The catalysed reaction is S-ubiquitinyl-[E1 ubiquitin-activating enzyme]-L-cysteine + [E2 ubiquitin-conjugating enzyme]-L-cysteine = [E1 ubiquitin-activating enzyme]-L-cysteine + S-ubiquitinyl-[E2 ubiquitin-conjugating enzyme]-L-cysteine.. It functions in the pathway protein modification; protein ubiquitination. Its function is as follows. Accepts ubiquitin from the E1 complex and catalyzes its covalent attachment to other proteins. In vitro catalyzes 'Lys-48'-linked polyubiquitination. This chain is Ubiquitin-conjugating enzyme E2 Q2 (UBE2Q2), found in Oryctolagus cuniculus (Rabbit).